We begin with the raw amino-acid sequence, 372 residues long: Lectin/endochitinase 1 (372 aa).

Residues 1–23 (MMMRFLSAVVIMSSAMAVGLVSA) form the signal peptide. Q24 is a binding site for substrate. Pyrrolidone carboxylic acid is present on Q24. Chitin-binding type-1 domains are found at residues 24–64 (QRCG…KCWS) and 69–111 (DHRC…RCSS). Disulfide bonds link C26–C41, C35–C47, C40–C54, and C58–C62. Position 42 to 53 (42 to 53 (SIWGWCGDSEPY)) interacts with substrate. H70 provides a ligand contact to Zn(2+). 4 cysteine pairs are disulfide-bonded: C72/C87, C81/C93, C86/C100, and C105/C109. Zn(2+) is bound at residue H90. A spacer region spans residues 113–128 (VRGPRVALSGNSTANS). N123 carries N-linked (GlcNAc...) asparagine glycosylation. Residues 129 to 372 (IGNVVVTEPL…FQRIQMRVAA (244 aa)) form a chitinase region.

Monomer and homodimer. Zinc favors dimerization. Active in the monomeric form but probably inactive in the dimeric form. The interaction with glycans on the mammalian TCR and MHC molecules of the T-cell and antigen-presenting cell, respectively, is inhibited by oligomers of GlcNAc. In terms of processing, proteolytically processed to yield a very small protein (8.5 kDa, 86 AA) containing only the two chitin-binding domains. As to expression, rhizomes and inflorescence with immature seeds.

The catalysed reaction is Random endo-hydrolysis of N-acetyl-beta-D-glucosaminide (1-&gt;4)-beta-linkages in chitin and chitodextrins.. Functionally, functions both as a chitinase and as a N-acetyl-D-glucosamine binding lectin. Inhibits the growth of several phytopathogenic chitin-containing fungi. Also possesses insecticidal activity and superantigenic properties. The polypeptide is Lectin/endochitinase 1 (UDA1) (Urtica dioica (Great nettle)).